Consider the following 369-residue polypeptide: Core histone macro-H2A.1 (369 aa).

The 116-residue stretch at 2–117 folds into the Histone H2A domain; sequence SSRGGKKKST…NIHPELLAKK (116 aa). Lys7 and Lys9 each carry N6-lactoyllysine; alternate. Lys18 bears the N6-methyllysine mark. An N6-acetyllysine; alternate modification is found at Lys116. Lys116 is covalently cross-linked (Glycyl lysine isopeptide (Lys-Gly) (interchain with G-Cter in ubiquitin); alternate). Lys117 is covalently cross-linked (Glycyl lysine isopeptide (Lys-Gly) (interchain with G-Cter in ubiquitin)). At Lys123 the chain carries N6-acetyllysine; alternate. Position 123 is an N6,N6-dimethyllysine; alternate (Lys123). Lys123 participates in a covalent cross-link: Glycyl lysine isopeptide (Lys-Gly) (interchain with G-Cter in SUMO2); alternate. Positions 128–180 are disordered; it reads ITPPPAKKAKSPSQKKPVAKKTGGKKGARKSKKKQGEVSKAASADSTTEGTPT. Thr129 carries the phosphothreonine modification. Over residues 144–160 the composition is skewed to basic residues; that stretch reads PVAKKTGGKKGARKSKK. Residue Lys167 forms a Glycyl lysine isopeptide (Lys-Gly) (interchain with G-Cter in SUMO2) linkage. 2 positions are modified to phosphoserine: Ser170 and Ser173. Thr178 carries the phosphothreonine modification. Positions 184–367 constitute a Macro domain; it reads TVLSTKSLFL…IYVQEMAKLD (184 aa). A Glycyl lysine isopeptide (Lys-Gly) (interchain with G-Cter in SUMO2) cross-link involves residue Lys189. Residues Asp203, Ile204, Val226, Ser275, Gly312, Ser313, Gly314, and Asn316 each coordinate a glycoprotein. A Glycyl lysine isopeptide (Lys-Gly) (interchain with G-Cter in SUMO2) cross-link involves residue Lys320.

This sequence belongs to the histone H2A family. The nucleosome is a histone octamer containing two molecules each of H2A, H2B, H3 and H4 assembled in one H3-H4 heterotetramer and two H2A-H2B heterodimers. Interacts with HDAC1 and HDAC2. Interacts with SPOP. Part of a complex consisting of MACROH2A1, CUL3 and SPOP. In terms of assembly, interacts with PARP1. Monoubiquitinated at either Lys-116 or Lys-117. May also be polyubiquitinated. Ubiquitination is mediated by the CUL3/SPOP E3 complex and does not promote proteasomal degradation. Instead, it is required for enrichment in inactive X chromosome chromatin. As to expression, widely expressed, with high levels in testis. Present in liver, kidney and adrenal gland (at protein level). In the liver, present in hepatocytes and at a lesser extent in cells of the bile ducts. In the kidney, expressed in proximal and distal convoluted tubules and in straight proximal tubules. In the adrenal gland, present in inner cells of the cortex and medulla.

It is found in the nucleus. The protein resides in the chromosome. Its function is as follows. Variant histone H2A which replaces conventional H2A in a subset of nucleosomes where it represses transcription. Nucleosomes wrap and compact DNA into chromatin, limiting DNA accessibility to the cellular machineries which require DNA as a template. Histones thereby play a central role in transcription regulation, DNA repair, DNA replication and chromosomal stability. DNA accessibility is regulated via a complex set of post-translational modifications of histones, also called histone code, and nucleosome remodeling. Involved in stable X chromosome inactivation. Inhibits the binding of transcription factors, including NF-kappa-B, and interferes with the activity of remodeling SWI/SNF complexes. Inhibits histone acetylation by EP300 and recruits class I HDACs, which induces a hypoacetylated state of chromatin. In terms of biological role, isoform that specifically binds poly-ADP-ribose and O-acetyl-ADP-ribose and plays a key role in NAD(+) metabolism. Able to bind to the ends of poly-ADP-ribose chains created by PARP1 and cap them. This prevents PARP1 from further addition of ADP-ribose and thus limits the consumption of nuclear NAD(+), allowing the cell to maintain proper NAD(+) levels in both the nucleus and the mitochondria to promote proper mitochondrial respiration. Increases the expression of genes involved in redox metabolism, including SOD3. In contrast to isoform 1, does not bind poly-ADP-ribose. Represses SOD3 gene expression. This chain is Core histone macro-H2A.1, found in Mus musculus (Mouse).